Here is a 193-residue protein sequence, read N- to C-terminus: Outer-membrane lipoprotein LolB (193 aa).

The first 21 residues, 1–21 (MRPARRFLAALACVAGALLSA), serve as a signal peptide directing secretion. Residue C22 is the site of N-palmitoyl cysteine attachment. C22 is lipidated: S-diacylglycerol cysteine.

It belongs to the LolB family. In terms of assembly, monomer.

It is found in the cell outer membrane. Its function is as follows. Plays a critical role in the incorporation of lipoproteins in the outer membrane after they are released by the LolA protein. The sequence is that of Outer-membrane lipoprotein LolB from Azoarcus sp. (strain BH72).